The primary structure comprises 431 residues: 3-phosphoshikimate 1-carboxyvinyltransferase (431 aa).

Positions 23, 24, and 28 each coordinate 3-phosphoshikimate. Phosphoenolpyruvate is bound at residue lysine 23. Phosphoenolpyruvate-binding residues include glycine 96 and arginine 124. Residues serine 169, glutamine 171, aspartate 317, and lysine 344 each coordinate 3-phosphoshikimate. Glutamine 171 is a phosphoenolpyruvate binding site. Catalysis depends on aspartate 317, which acts as the Proton acceptor. 2 residues coordinate phosphoenolpyruvate: arginine 348 and arginine 390.

It belongs to the EPSP synthase family. As to quaternary structure, monomer.

Its subcellular location is the cytoplasm. It catalyses the reaction 3-phosphoshikimate + phosphoenolpyruvate = 5-O-(1-carboxyvinyl)-3-phosphoshikimate + phosphate. The protein operates within metabolic intermediate biosynthesis; chorismate biosynthesis; chorismate from D-erythrose 4-phosphate and phosphoenolpyruvate: step 6/7. Its function is as follows. Catalyzes the transfer of the enolpyruvyl moiety of phosphoenolpyruvate (PEP) to the 5-hydroxyl of shikimate-3-phosphate (S3P) to produce enolpyruvyl shikimate-3-phosphate and inorganic phosphate. This Syntrophotalea carbinolica (strain DSM 2380 / NBRC 103641 / GraBd1) (Pelobacter carbinolicus) protein is 3-phosphoshikimate 1-carboxyvinyltransferase.